A 455-amino-acid chain; its full sequence is Bifunctional protein GlmU (455 aa).

A pyrophosphorylase region spans residues Met-1–Arg-230. Residues Leu-9–Gly-12, Lys-23, Gln-73, and Gly-78–Thr-79 each bind UDP-N-acetyl-alpha-D-glucosamine. Asp-103 provides a ligand contact to Mg(2+). Gly-140, Glu-155, Asn-170, and Asn-228 together coordinate UDP-N-acetyl-alpha-D-glucosamine. Asn-228 is a binding site for Mg(2+). Residues Val-231 to Lys-251 form a linker region. The tract at residues Gly-252–Asn-455 is N-acetyltransferase. The UDP-N-acetyl-alpha-D-glucosamine site is built by Arg-333 and Lys-351. His-363 acts as the Proton acceptor in catalysis. Positions 366 and 377 each coordinate UDP-N-acetyl-alpha-D-glucosamine. Residues Asn-386–Tyr-387, Ala-423, and Arg-440 contribute to the acetyl-CoA site.

The protein in the N-terminal section; belongs to the N-acetylglucosamine-1-phosphate uridyltransferase family. This sequence in the C-terminal section; belongs to the transferase hexapeptide repeat family. As to quaternary structure, homotrimer. The cofactor is Mg(2+).

It localises to the cytoplasm. The enzyme catalyses alpha-D-glucosamine 1-phosphate + acetyl-CoA = N-acetyl-alpha-D-glucosamine 1-phosphate + CoA + H(+). The catalysed reaction is N-acetyl-alpha-D-glucosamine 1-phosphate + UTP + H(+) = UDP-N-acetyl-alpha-D-glucosamine + diphosphate. It participates in nucleotide-sugar biosynthesis; UDP-N-acetyl-alpha-D-glucosamine biosynthesis; N-acetyl-alpha-D-glucosamine 1-phosphate from alpha-D-glucosamine 6-phosphate (route II): step 2/2. The protein operates within nucleotide-sugar biosynthesis; UDP-N-acetyl-alpha-D-glucosamine biosynthesis; UDP-N-acetyl-alpha-D-glucosamine from N-acetyl-alpha-D-glucosamine 1-phosphate: step 1/1. It functions in the pathway bacterial outer membrane biogenesis; LPS lipid A biosynthesis. Functionally, catalyzes the last two sequential reactions in the de novo biosynthetic pathway for UDP-N-acetylglucosamine (UDP-GlcNAc). The C-terminal domain catalyzes the transfer of acetyl group from acetyl coenzyme A to glucosamine-1-phosphate (GlcN-1-P) to produce N-acetylglucosamine-1-phosphate (GlcNAc-1-P), which is converted into UDP-GlcNAc by the transfer of uridine 5-monophosphate (from uridine 5-triphosphate), a reaction catalyzed by the N-terminal domain. This Halalkalibacterium halodurans (strain ATCC BAA-125 / DSM 18197 / FERM 7344 / JCM 9153 / C-125) (Bacillus halodurans) protein is Bifunctional protein GlmU.